Here is a 130-residue protein sequence, read N- to C-terminus: Holo-[acyl-carrier-protein] synthase (130 aa).

Mg(2+) is bound by residues aspartate 9 and glutamate 58.

It belongs to the P-Pant transferase superfamily. AcpS family. Mg(2+) serves as cofactor.

The protein resides in the cytoplasm. It catalyses the reaction apo-[ACP] + CoA = holo-[ACP] + adenosine 3',5'-bisphosphate + H(+). Transfers the 4'-phosphopantetheine moiety from coenzyme A to a Ser of acyl-carrier-protein. The polypeptide is Holo-[acyl-carrier-protein] synthase (Mycobacterium tuberculosis (strain CDC 1551 / Oshkosh)).